The chain runs to 175 residues: Bacterial proteasome activator (175 aa).

The disordered stretch occupies residues 152–175 (LPPGIQVPGAQRGGATHPGTGQYL). The short motif at 173–175 (QYL) is the HbYX motif element.

It belongs to the Bpa family. In terms of assembly, forms a homooligomeric, either hexameric or heptameric, ring-like structure which stacks co-axially with the proteasomal alpha-rings.

Interacts with the core proteasome alpha-subunit (PrcA) through its C-terminal hydrophobic-tyrosine-X motif (HbYX motif). Interaction of Bpa with the proteasome stimulates proteasomal peptidase and casein degradation activity, which suggests Bpa could play a role in the removal of non-native or damaged proteins by influencing the conformation of the proteasome complex upon interaction. In Mycolicibacterium smegmatis (strain ATCC 700084 / mc(2)155) (Mycobacterium smegmatis), this protein is Bacterial proteasome activator.